The sequence spans 678 residues: DNA ligase (678 aa).

NAD(+)-binding positions include 35 to 39 (DSVYD), 84 to 85 (SL), and E116. Residue K118 is the N6-AMP-lysine intermediate of the active site. NAD(+) contacts are provided by R139, E178, K297, and K321. C415, C418, C433, and C438 together coordinate Zn(2+). Positions 600–678 (DGNQIFAGKT…EAQLLEMLNE (79 aa)) constitute a BRCT domain.

This sequence belongs to the NAD-dependent DNA ligase family. LigA subfamily. It depends on Mg(2+) as a cofactor. Mn(2+) serves as cofactor.

It carries out the reaction NAD(+) + (deoxyribonucleotide)n-3'-hydroxyl + 5'-phospho-(deoxyribonucleotide)m = (deoxyribonucleotide)n+m + AMP + beta-nicotinamide D-nucleotide.. Functionally, DNA ligase that catalyzes the formation of phosphodiester linkages between 5'-phosphoryl and 3'-hydroxyl groups in double-stranded DNA using NAD as a coenzyme and as the energy source for the reaction. It is essential for DNA replication and repair of damaged DNA. The polypeptide is DNA ligase (Nostoc punctiforme (strain ATCC 29133 / PCC 73102)).